Here is a 582-residue protein sequence, read N- to C-terminus: Aspartate--tRNA(Asp/Asn) ligase (582 aa).

An L-aspartate-binding site is contributed by Glu-177. The tract at residues 201-204 is aspartate; sequence QLFK. L-aspartate is bound at residue Arg-223. Residues 223 to 225 and Gln-232 each bind ATP; that span reads RDE. L-aspartate is bound at residue His-447. Position 481 (Glu-481) interacts with ATP. An L-aspartate-binding site is contributed by Arg-488. An ATP-binding site is contributed by 533–536; that stretch reads GLDR.

This sequence belongs to the class-II aminoacyl-tRNA synthetase family. Type 1 subfamily. In terms of assembly, homodimer.

The protein resides in the cytoplasm. The enzyme catalyses tRNA(Asx) + L-aspartate + ATP = L-aspartyl-tRNA(Asx) + AMP + diphosphate. Aspartyl-tRNA synthetase with relaxed tRNA specificity since it is able to aspartylate not only its cognate tRNA(Asp) but also tRNA(Asn). Reaction proceeds in two steps: L-aspartate is first activated by ATP to form Asp-AMP and then transferred to the acceptor end of tRNA(Asp/Asn). The chain is Aspartate--tRNA(Asp/Asn) ligase from Chlamydia muridarum (strain MoPn / Nigg).